Here is a 131-residue protein sequence, read N- to C-terminus: Synaptobrevin-like protein (131 aa).

At M1–K81 the chain is on the cytoplasmic side. A v-SNARE coiled-coil homology domain is found at R18–K78. A helical; Anchor for type IV membrane protein transmembrane segment spans residues M82 to V102. Over S103–Q131 the chain is Vesicular. Residues S112–Q131 form a disordered region. Residues D122 to Q131 show a composition bias toward polar residues.

Belongs to the synaptobrevin family.

It localises to the cytoplasmic vesicle. Its subcellular location is the secretory vesicle. The protein localises to the synaptic vesicle membrane. It is found in the synapse. The protein resides in the synaptosome. In terms of biological role, unknown, but synaptobrevins are presumed to be involved in targeting and fusion of synaptic vesicles with the presynaptic membrane as well as in neurotransmitter release. The polypeptide is Synaptobrevin-like protein (Schistosoma mansoni (Blood fluke)).